We begin with the raw amino-acid sequence, 96 residues long: MNIRPLHDRVIVERQEVESKSAGGIVLTGSAAEKSTRGVVLAVGKGRILENGTVQPLDVKVGDTVIFAESYGTKTEKIDGKEVLIMSENDIMAIVD.

Belongs to the GroES chaperonin family. In terms of assembly, heptamer of 7 subunits arranged in a ring. Interacts with the chaperonin GroEL.

It localises to the cytoplasm. Functionally, together with the chaperonin GroEL, plays an essential role in assisting protein folding. The GroEL-GroES system forms a nano-cage that allows encapsulation of the non-native substrate proteins and provides a physical environment optimized to promote and accelerate protein folding. GroES binds to the apical surface of the GroEL ring, thereby capping the opening of the GroEL channel. This Vibrio vulnificus (strain CMCP6) protein is Co-chaperonin GroES 1.